The chain runs to 115 residues: Large ribosomal subunit protein bL19 (115 aa).

The protein belongs to the bacterial ribosomal protein bL19 family.

This protein is located at the 30S-50S ribosomal subunit interface and may play a role in the structure and function of the aminoacyl-tRNA binding site. The protein is Large ribosomal subunit protein bL19 of Tropheryma whipplei (strain TW08/27) (Whipple's bacillus).